A 90-amino-acid chain; its full sequence is Small ribosomal subunit protein bS16 (90 aa).

This sequence belongs to the bacterial ribosomal protein bS16 family.

In Streptococcus agalactiae serotype III (strain NEM316), this protein is Small ribosomal subunit protein bS16.